The following is a 308-amino-acid chain: uncharacterized protein (308 aa).

This is an uncharacterized protein from Mycoplasmoides gallisepticum (strain R(low / passage 15 / clone 2)) (Mycoplasma gallisepticum).